A 443-amino-acid chain; its full sequence is POU domain, class 3, transcription factor 3-B (443 aa).

Disordered regions lie at residues Ile-21–Val-40, Ser-100–Trp-150, and Asn-182–Asp-244. A compositionally biased stretch (polar residues) spans Pro-101 to Asn-121. Residues Ser-210 to Ala-225 show a composition bias toward basic residues. A POU-specific domain is found at Glu-238–Asp-312. Phosphoserine is present on Ser-317. The segment at residues Lys-330 to Thr-389 is a DNA-binding region (homeobox).

The protein belongs to the POU transcription factor family. Class-3 subfamily. Predominantly expressed in the central nervous system.

The protein localises to the nucleus. Its function is as follows. Transcription factor that may play important roles in patterning the embryonic brain. The protein is POU domain, class 3, transcription factor 3-B (pou3f3b) of Danio rerio (Zebrafish).